Reading from the N-terminus, the 291-residue chain is Kidney mitochondrial carrier protein 1 (291 aa).

Serine 2 is subject to N-acetylserine. Solcar repeat units follow at residues 7 to 96, 104 to 189, and 198 to 289; these read KPFV…LKRL, ETLP…TKKH, and DTVY…LKKL. The next 6 helical transmembrane spans lie at 9–26, 71–89, 105–124, 164–183, 204–224, and 264–283; these read FVYG…TFPI, GIAP…KIGT, TLPI…STIA, GVSL…LPVY, FLSS…VDVV, and GFWP…FVTY.

The protein belongs to the mitochondrial carrier (TC 2.A.29) family. As to quaternary structure, interacts with VDAC1.

The protein localises to the mitochondrion inner membrane. It carries out the reaction sulfite(in) + sulfate(out) = sulfite(out) + sulfate(in). The enzyme catalyses thiosulfate(in) + sulfate(out) = thiosulfate(out) + sulfate(in). It catalyses the reaction sulfate(out) + phosphate(in) = sulfate(in) + phosphate(out). The catalysed reaction is oxalate(in) + sulfate(out) = oxalate(out) + sulfate(in). It carries out the reaction malonate(in) + sulfate(out) = malonate(out) + sulfate(in). The enzyme catalyses maleate(in) + sulfate(out) = maleate(out) + sulfate(in). It catalyses the reaction (S)-malate(in) + sulfate(out) = (S)-malate(out) + sulfate(in). The catalysed reaction is (3S)-citramalate(in) + sulfate(out) = (3S)-citramalate(out) + sulfate(in). It carries out the reaction (3R)-citramalate(in) + sulfate(out) = (3R)-citramalate(out) + sulfate(in). The enzyme catalyses sulfate(out) + succinate(in) = sulfate(in) + succinate(out). It catalyses the reaction (S,S)-tartrate(in) + sulfate(out) = (S,S)-tartrate(out) + sulfate(in). The catalysed reaction is (2R,3R)-tartrate(in) + sulfate(out) = (2R,3R)-tartrate(out) + sulfate(in). It carries out the reaction D-aspartate(in) + sulfate(out) = D-aspartate(out) + sulfate(in). The enzyme catalyses L-aspartate(in) + sulfate(out) = L-aspartate(out) + sulfate(in). It catalyses the reaction sulfate(in) = sulfate(out). The catalysed reaction is phosphate(in) = phosphate(out). It carries out the reaction (S)-malate(out) = (S)-malate(in). With respect to regulation, increased activity at pH 6.0. sulfate/sulfate exchange activity is inhibited strongly by pyridoxal 5'-phosphate, bathophenanthroline and the organic mercurials mersalyl, p-chloromercuribenzoate and HgCl2. Functionally, antiporter that transports inorganic anions (sulfate, sulfite, thiosulfate and phosphate) and, to a lesser extent, a variety of dicarboxylates (e.g. malonate, malate and citramalate) and, even more so, aspartate. The sulfate/sulfate exchange is much higher than the phosphate/phosphate and malate/malate exchanges. The transport affinities is higher for sulfate and thiosulfate than for any other substrate. May catalyze the export of sulfite and thiosulfate (the hydrogen sulfide degradation products) from the mitochondria, thereby modulating the level of the hydrogen sulfide. Also may mediate a very low unidirectional transport of sulfate, phosphate and (S)-malate. The chain is Kidney mitochondrial carrier protein 1 from Homo sapiens (Human).